Reading from the N-terminus, the 352-residue chain is MGIDKRKDDHIYLASSELSQIGSAWFEEVVLIHNALPEIDLSEVDLTTRFLGAPVKAPFGIGAMTGGTELAGKINAELAKAAEEFGIPIYVGSQRIALVKPEVKWTFEVVKQNAPHVPKVANLGAPQLAELGERELEEWVVQAIDMIDAYAIAIHLNAAQEVVQPEGEPRFKGVLEKLKIVKRAAGKPLIVKETGNGISKEVAARLSGIADAIDVGGFGGTSFVAIEGARAKESPLQKRLAETYKWWGIPTAASICEVKSAYAGYLIASGGIRSGLDGAKAIALGANFFTMSQPLLKAALDGRLREEIAMIIAELKTAMFLTGARTVQELALVPRVYGPRLRNWIEQRRLTC.

Residue Arg-6 to Lys-7 coordinates substrate. FMN is bound by residues Ala-63–Thr-65, Ser-93, and Asn-122. Residue Ser-93–Arg-95 participates in substrate binding. Gln-160 lines the substrate pocket. Glu-161 contacts Mg(2+). Residues Lys-192, Thr-221, Gly-271–Arg-273, and Ser-292–Gln-293 contribute to the FMN site.

The protein belongs to the IPP isomerase type 2 family. In terms of assembly, homooctamer. Dimer of tetramers. FMN is required as a cofactor. The cofactor is NADPH. Mg(2+) serves as cofactor.

It is found in the cytoplasm. The enzyme catalyses isopentenyl diphosphate = dimethylallyl diphosphate. Involved in the biosynthesis of isoprenoids. Catalyzes the 1,3-allylic rearrangement of the homoallylic substrate isopentenyl (IPP) to its allylic isomer, dimethylallyl diphosphate (DMAPP). The chain is Isopentenyl-diphosphate delta-isomerase from Pyrobaculum aerophilum (strain ATCC 51768 / DSM 7523 / JCM 9630 / CIP 104966 / NBRC 100827 / IM2).